Reading from the N-terminus, the 584-residue chain is MKYRTHRCNELSLSNVGERVRLSGWVHRYRNHGGVVFIDLRDRFGITQIVCREDEKPELHQLVDSVRSEWVLSIEGTVCRRLEGMENANLATGEIEVDIEKVDILSKAKNLPFSISDDHIHVNEELRLEYRYLDMRRGQILDRLVHRHKVMMACRQYMDKQGFTEVVTPILGKSTPEGARDYLVPSRIYPGSFYALPQSPQLFKQILMVGGLDRYFQIATCFRDEDLRADRQPEFAQIDIEMSFGTPNDLFPIIEQLVVEMFAVQGIKIDLPLPRMTYQEAKDLYGTDKPDLRFGLQLHDCREHAKEFSFSIFLDQLAQGGTIKGFCVPGGADMSRKQLDVYTEFVKRYGAMGLVWIKKQESGIASNVAKFASEAVFQAMFADFGAQNNDILLLIAAPEDVANQSLDHLRRLIAKERNFYNEAQYNFVWITDFPLFAKEDGKICSEHHPFTSPLDEDIPLLDKDPLSVRSSSYDLVLNGYEIASGSQRIHNADLQNKIFSILELSPESIKEKFDFFIDALSFGTPPHLGIALGLDRIMMVLTGAEGIREVIAFPKTQKAADLMMDAPAEIMTSQLKELSIKVTS.

Glu177 serves as a coordination point for L-aspartate. The tract at residues 201-204 is aspartate; the sequence is QLFK. An L-aspartate-binding site is contributed by Arg223. ATP contacts are provided by residues 223–225 and Gln232; that span reads RDE. Position 447 (His447) interacts with L-aspartate. Residue Glu481 coordinates ATP. Residue Arg488 coordinates L-aspartate. Position 533–536 (533–536) interacts with ATP; the sequence is GLDR.

It belongs to the class-II aminoacyl-tRNA synthetase family. Type 1 subfamily. In terms of assembly, homodimer.

The protein resides in the cytoplasm. The enzyme catalyses tRNA(Asx) + L-aspartate + ATP = L-aspartyl-tRNA(Asx) + AMP + diphosphate. In terms of biological role, aspartyl-tRNA synthetase with relaxed tRNA specificity since it is able to aspartylate not only its cognate tRNA(Asp) but also tRNA(Asn). Reaction proceeds in two steps: L-aspartate is first activated by ATP to form Asp-AMP and then transferred to the acceptor end of tRNA(Asp/Asn). The chain is Aspartate--tRNA(Asp/Asn) ligase from Chlamydia abortus (strain DSM 27085 / S26/3) (Chlamydophila abortus).